A 448-amino-acid chain; its full sequence is Glutamate--tRNA ligase 2 (448 aa).

The short motif at 9–19 is the 'HIGH' region element; sequence PSPTGKLHIGN. Positions 240 to 244 match the 'KMSKS' region motif; the sequence is KISKR. Residue K243 participates in ATP binding.

The protein belongs to the class-I aminoacyl-tRNA synthetase family. Glutamate--tRNA ligase type 1 subfamily. In terms of assembly, monomer.

It localises to the cytoplasm. The catalysed reaction is tRNA(Glu) + L-glutamate + ATP = L-glutamyl-tRNA(Glu) + AMP + diphosphate. Catalyzes the attachment of glutamate to tRNA(Glu) in a two-step reaction: glutamate is first activated by ATP to form Glu-AMP and then transferred to the acceptor end of tRNA(Glu). In Orientia tsutsugamushi (strain Boryong) (Rickettsia tsutsugamushi), this protein is Glutamate--tRNA ligase 2.